The chain runs to 483 residues: Protein nucleotidyltransferase YdiU (483 aa).

ATP is bound by residues glycine 87, glycine 89, arginine 90, lysine 110, aspartate 122, glycine 123, arginine 173, and arginine 180. Aspartate 249 functions as the Proton acceptor in the catalytic mechanism. Residues asparagine 250 and aspartate 259 each coordinate Mg(2+). Aspartate 259 provides a ligand contact to ATP.

The protein belongs to the SELO family. Mg(2+) is required as a cofactor. Mn(2+) serves as cofactor.

The enzyme catalyses L-seryl-[protein] + ATP = 3-O-(5'-adenylyl)-L-seryl-[protein] + diphosphate. It catalyses the reaction L-threonyl-[protein] + ATP = 3-O-(5'-adenylyl)-L-threonyl-[protein] + diphosphate. The catalysed reaction is L-tyrosyl-[protein] + ATP = O-(5'-adenylyl)-L-tyrosyl-[protein] + diphosphate. It carries out the reaction L-histidyl-[protein] + UTP = N(tele)-(5'-uridylyl)-L-histidyl-[protein] + diphosphate. The enzyme catalyses L-seryl-[protein] + UTP = O-(5'-uridylyl)-L-seryl-[protein] + diphosphate. It catalyses the reaction L-tyrosyl-[protein] + UTP = O-(5'-uridylyl)-L-tyrosyl-[protein] + diphosphate. In terms of biological role, nucleotidyltransferase involved in the post-translational modification of proteins. It can catalyze the addition of adenosine monophosphate (AMP) or uridine monophosphate (UMP) to a protein, resulting in modifications known as AMPylation and UMPylation. The chain is Protein nucleotidyltransferase YdiU from Pelagibacter ubique (strain HTCC1062).